A 416-amino-acid chain; its full sequence is UDP-N-acetylmuramoylalanine--D-glutamate ligase (416 aa).

108 to 114 (GTTGKTT) contacts ATP.

This sequence belongs to the MurCDEF family.

Its subcellular location is the cytoplasm. It carries out the reaction UDP-N-acetyl-alpha-D-muramoyl-L-alanine + D-glutamate + ATP = UDP-N-acetyl-alpha-D-muramoyl-L-alanyl-D-glutamate + ADP + phosphate + H(+). Its pathway is cell wall biogenesis; peptidoglycan biosynthesis. Cell wall formation. Catalyzes the addition of glutamate to the nucleotide precursor UDP-N-acetylmuramoyl-L-alanine (UMA). In Chlamydia trachomatis serovar L2 (strain ATCC VR-902B / DSM 19102 / 434/Bu), this protein is UDP-N-acetylmuramoylalanine--D-glutamate ligase.